Reading from the N-terminus, the 123-residue chain is Small ribosomal subunit protein uS12cz/uS12cy (123 aa).

Belongs to the universal ribosomal protein uS12 family. In terms of assembly, part of the 30S ribosomal subunit.

The protein resides in the plastid. The protein localises to the chloroplast. With S4 and S5 plays an important role in translational accuracy. Located at the interface of the 30S and 50S subunits. This Citrus sinensis (Sweet orange) protein is Small ribosomal subunit protein uS12cz/uS12cy (rps12-A).